Reading from the N-terminus, the 275-residue chain is Large ribosomal subunit protein uL2 (275 aa).

Disordered stretches follow at residues 24–54 (LYKG…VRHQ) and 223–275 (VAMN…RHKR). Basic and acidic residues-rich tracts occupy residues 25 to 38 (YKGR…EKKT) and 229 to 241 (DHPH…RTGE).

This sequence belongs to the universal ribosomal protein uL2 family. Part of the 50S ribosomal subunit. Forms a bridge to the 30S subunit in the 70S ribosome.

Functionally, one of the primary rRNA binding proteins. Required for association of the 30S and 50S subunits to form the 70S ribosome, for tRNA binding and peptide bond formation. It has been suggested to have peptidyltransferase activity; this is somewhat controversial. Makes several contacts with the 16S rRNA in the 70S ribosome. The polypeptide is Large ribosomal subunit protein uL2 (Azoarcus sp. (strain BH72)).